A 324-amino-acid polypeptide reads, in one-letter code: Beta-ketoacyl-[acyl-carrier-protein] synthase III (324 aa).

Residues Cys114 and His251 contribute to the active site. The interval 252 to 256 (QANLR) is ACP-binding. Asn281 is an active-site residue.

The protein belongs to the thiolase-like superfamily. FabH family. As to quaternary structure, homodimer.

It is found in the cytoplasm. It carries out the reaction malonyl-[ACP] + acetyl-CoA + H(+) = 3-oxobutanoyl-[ACP] + CO2 + CoA. It functions in the pathway lipid metabolism; fatty acid biosynthesis. Functionally, catalyzes the condensation reaction of fatty acid synthesis by the addition to an acyl acceptor of two carbons from malonyl-ACP. Catalyzes the first condensation reaction which initiates fatty acid synthesis and may therefore play a role in governing the total rate of fatty acid production. Possesses both acetoacetyl-ACP synthase and acetyl transacylase activities. Its substrate specificity determines the biosynthesis of branched-chain and/or straight-chain of fatty acids. This chain is Beta-ketoacyl-[acyl-carrier-protein] synthase III, found in Dinoroseobacter shibae (strain DSM 16493 / NCIMB 14021 / DFL 12).